A 2196-amino-acid chain; its full sequence is Non-reducing polyketide synthase CTB1 (2196 aa).

The tract at residues 11-250 (AFGDQTYDCS…TRLPITAPYH (240 aa)) is N-terminal acylcarrier protein transacylase domain (SAT). The region spanning 381-814 (KSPIAILAAS…GGNTCLVLED (434 aa)) is the Ketosynthase family 3 (KS3) domain. Catalysis depends on for beta-ketoacyl synthase activity residues cysteine 553, histidine 688, and histidine 733. The segment at 922 to 1223 (AFTGQGSAFA…QTFASINKDK (302 aa)) is malonyl-CoA:ACP transacylase (MAT) domain. A product template (PT) domain region spans residues 1298-1611 (SSSIHKVITN…VPKRLMHYIV (314 aa)). Positions 1302–1441 (HKVITNTITA…EKTALKSAAL (140 aa)) are N-terminal hotdog fold. The 307-residue stretch at 1302–1608 (HKVITNTITA…LQGVPKRLMH (307 aa)) folds into the PKS/mFAS DH domain. The active-site Proton acceptor; for dehydratase activity is histidine 1335. Positions 1460 to 1608 (TYRFSKGMIY…LQGVPKRLMH (149 aa)) are C-terminal hotdog fold. The active-site Proton donor; for dehydratase activity is aspartate 1520. Residues 1617 to 1666 (KASGPPTEKKTSSPPVEKKASAPVAPTRPAIQRKNASIPPPATQVTPQNK) form a disordered region. Residues 1623–1636 (TEKKTSSPPVEKKA) show a composition bias toward basic and acidic residues. Carrier domains lie at 1671–1748 (PSVS…TRLS) and 1775–1857 (DPSP…SGST). O-(pantetheine 4'-phosphoryl)serine is present on residues serine 1708 and serine 1816. Polar residues predominate over residues 1856-1867 (STESFDSTTTKP). Positions 1856-1923 (STESFDSTTT…PPKGRIPPAW (68 aa)) are disordered. Over residues 1872–1887 (ATPPLTDSSASSPPSS) the composition is skewed to low complexity. A thioesterase (TE) domain region spans residues 1937–2187 (ILFLFPDGAG…SGAQMLVEHM (251 aa)).

The cofactor is pantetheine 4'-phosphate.

The catalysed reaction is 6 malonyl-CoA + acetyl-CoA + 6 H(+) = nor-toralactone + 6 CO2 + 7 CoA + 2 H2O. It participates in mycotoxin biosynthesis. Functionally, polyketide synthase; part of the gene cluster that mediates the biosynthesis of cercosporin, a light-activated, non-host-selective toxin. The perylenequinone chromophore of cercosporin absorbs light energy to attain an electronically-activated triplet state and produces active oxygen species such as the hydroxyl radical, superoxide, hydrogen peroxide or singlet oxygen upon reaction with oxygen molecules. These reactive oxygen species cause damage to various cellular components including lipids, proteins and nucleic acids. The first step of cercosporin biosynthesis is performed by the polyketide synthase CTB1 which catalyzes the formation of nor-toralactone. The starter unit acyltransferase (SAT) domain of CTB1 initiates polyketide extension by the selective utilization of acetyl-CoA, which is elongated to the heptaketide in the beta-ketoacyl synthase (KS) domain by successive condensations with six malonyl units introduced by the malonyl acyltransferase (MAT) domain. The product template (PT) domain catalyzes C4-C9 and C2-C11 aldol cyclizations and dehydrations to a trihydroxynaphthalene, which is thought to be delivered to the thioesterase (TE) domain for product release. The bifunctional enzyme CTB3 then methylates nor-toralactone to toralactone before conducting an unusual oxidative aromatic ring opening. The O-methyltransferase CTB2 further methylates the nascent OH-6 of the CBT3 product, blocking further oxidation at this site before the reductase CTB6 reduces the 2-oxopropyl ketone at position C7, giving naphthalene. The FAD-dependent monooxygenase CTB5 in concert with the multicopper oxidase CTB12 are responsible for homodimerization of naphthalene with CTB7 installing the dioxepine moiety, finally producing cercosporin. The fasciclin domain-containing protein CTB11 might act with CTB5 and CTB12 whereas the roles of CTB9 and CTB10 have still to be elucidated. This Cercospora nicotianae (Barn spot disease fungus) protein is Non-reducing polyketide synthase CTB1.